Consider the following 335-residue polypeptide: Tetraacyldisaccharide 4'-kinase (335 aa).

An ATP-binding site is contributed by 59 to 66 (TAGGNGKT).

Belongs to the LpxK family.

The enzyme catalyses a lipid A disaccharide + ATP = a lipid IVA + ADP + H(+). The protein operates within glycolipid biosynthesis; lipid IV(A) biosynthesis; lipid IV(A) from (3R)-3-hydroxytetradecanoyl-[acyl-carrier-protein] and UDP-N-acetyl-alpha-D-glucosamine: step 6/6. Transfers the gamma-phosphate of ATP to the 4'-position of a tetraacyldisaccharide 1-phosphate intermediate (termed DS-1-P) to form tetraacyldisaccharide 1,4'-bis-phosphate (lipid IVA). The protein is Tetraacyldisaccharide 4'-kinase of Vibrio vulnificus (strain YJ016).